A 228-amino-acid polypeptide reads, in one-letter code: Ribonuclease 3 (228 aa).

Residues 5-134 form the RNase III domain; the sequence is RSKLEKDYGI…FLGALLLDKG (130 aa). Residue glutamate 47 participates in Mg(2+) binding. Aspartate 51 is a catalytic residue. Residues aspartate 120 and glutamate 123 each contribute to the Mg(2+) site. Glutamate 123 is an active-site residue. The 69-residue stretch at 160-228 folds into the DRBM domain; sequence DYKTSLQELL…AAKNALATLQ (69 aa).

The protein belongs to the ribonuclease III family. As to quaternary structure, homodimer. It depends on Mg(2+) as a cofactor.

The protein localises to the cytoplasm. The enzyme catalyses Endonucleolytic cleavage to 5'-phosphomonoester.. Functionally, digests double-stranded RNA. Involved in the processing of primary rRNA transcript to yield the immediate precursors to the large and small rRNAs (23S and 16S). Processes some mRNAs, and tRNAs when they are encoded in the rRNA operon. Processes pre-crRNA and tracrRNA of type II CRISPR loci if present in the organism. The chain is Ribonuclease 3 from Streptococcus agalactiae serotype III (strain NEM316).